A 208-amino-acid polypeptide reads, in one-letter code: MPTLDEAVTTVLTPVFAAGSEIGADLALEEVSVTTAGRRQVVRVVVDRAGDEPGDLDLDAVAAASTAVSEALDESGVLGEAPYTLEVSSPGVDRPLTTPRHWSRARGRLVRAVLTDGTALLVRVVSVDEAGVHGTLEPQMVKGKPPRAKDVGAPRDLAWADLVRGEVQVEFRRPGEDVEDLVADPGADDELDELDELDELDDGDEDEQ.

Residues 175–208 (GEDVEDLVADPGADDELDELDELDELDDGDEDEQ) form a disordered region. The segment covering 177–208 (DVEDLVADPGADDELDELDELDELDDGDEDEQ) has biased composition (acidic residues).

It belongs to the RimP family.

The protein resides in the cytoplasm. Functionally, required for maturation of 30S ribosomal subunits. The protein is Ribosome maturation factor RimP of Kineococcus radiotolerans (strain ATCC BAA-149 / DSM 14245 / SRS30216).